The sequence spans 626 residues: Phosphoenolpyruvate carboxykinase (ATP) 2 (626 aa).

2 disordered regions span residues 1 to 23 (MASP…APVN) and 64 to 86 (PNLV…KHQQ). Residue 324 to 331 (GLSGTGKT) participates in ATP binding.

Belongs to the phosphoenolpyruvate carboxykinase (ATP) family. Homohexamer.

Its subcellular location is the cytoplasm. It catalyses the reaction oxaloacetate + ATP = phosphoenolpyruvate + ADP + CO2. Its pathway is carbohydrate biosynthesis; gluconeogenesis. In Urochloa panicoides (Panic liverseed grass), this protein is Phosphoenolpyruvate carboxykinase (ATP) 2 (PCK2).